The chain runs to 245 residues: tRNA1(Val) (adenine(37)-N6)-methyltransferase (245 aa).

It belongs to the methyltransferase superfamily. tRNA (adenine-N(6)-)-methyltransferase family.

It localises to the cytoplasm. The catalysed reaction is adenosine(37) in tRNA1(Val) + S-adenosyl-L-methionine = N(6)-methyladenosine(37) in tRNA1(Val) + S-adenosyl-L-homocysteine + H(+). Functionally, specifically methylates the adenine in position 37 of tRNA(1)(Val) (anticodon cmo5UAC). The chain is tRNA1(Val) (adenine(37)-N6)-methyltransferase from Klebsiella pneumoniae (strain 342).